Reading from the N-terminus, the 514-residue chain is Palmitoyltransferase pfa3 (514 aa).

Topologically, residues 1-31 (MATLAMSTPSSPTWPKRRPKAWAMRCERYCC) are cytoplasmic. A helical membrane pass occupies residues 32–52 (AAASYFPLAFVYSLTTWAVYV). Over 53–64 (EASVGLKPSSSS) the chain is Lumenal. Residues 65–85 (WIGLPSSILGVVLYLALNISY) form a helical membrane-spanning segment. At 86–174 (TTAVFTDPGS…TCVGLRNYKA (89 aa)) the chain is on the cytoplasmic side. The region spanning 130 to 180 (RFCKKCQCPKPDRAHHCSTCKRCVLKMDHHCPWLATCVGLRNYKAFLLFLI) is the DHHC domain. Residues 175–195 (FLLFLIYTSLFCWVDFGVSAI) form a helical membrane-spanning segment. Topologically, residues 196–209 (WIWTEVFNDTRYMD) are lumenal. Residues 210–230 (GILPVNVVLLSILGGIIGLVL) form a helical membrane-spanning segment. Residues 231-514 (TGFTAWHISL…SREDDWRDWD (284 aa)) are Cytoplasmic-facing. Disordered regions lie at residues 307–336 (VTRP…DLER) and 436–514 (GNEL…RDWD). Residues 318–328 (DNLTPAQQALS) are compositionally biased toward polar residues. Positions 505–514 (SREDDWRDWD) are enriched in basic and acidic residues.

This sequence belongs to the DHHC palmitoyltransferase family. PFA3 subfamily. In terms of processing, autopalmitoylated.

It is found in the vacuole membrane. The catalysed reaction is L-cysteinyl-[protein] + hexadecanoyl-CoA = S-hexadecanoyl-L-cysteinyl-[protein] + CoA. Functionally, palmitoyltransferase specific for VAC8. Palmitoylates VAC8 at one or more of its N-terminal cysteine residues, which is required for its proper membrane localization. The protein is Palmitoyltransferase pfa3 (pfa3) of Emericella nidulans (strain FGSC A4 / ATCC 38163 / CBS 112.46 / NRRL 194 / M139) (Aspergillus nidulans).